A 571-amino-acid chain; its full sequence is Quinone-dependent D-lactate dehydrogenase (571 aa).

Residues 44-273 enclose the FAD-binding PCMH-type domain; it reads GGGPVFAVVR…FAVRTRTFPR (230 aa). Residues 78–82, 86–87, Gly145, Ser152, Gly162, and Val263 each bind FAD; these read ASNTG and GS.

The protein belongs to the quinone-dependent D-lactate dehydrogenase family. Requires FAD as cofactor.

It localises to the cell membrane. The enzyme catalyses (R)-lactate + a quinone = a quinol + pyruvate. Functionally, catalyzes the oxidation of D-lactate to pyruvate. Also has weak activity with L-lactate and DL-2-hydroxybutyrate. Electrons derived from D-lactate oxidation enter the electron transport chain. Essential for growth with D-lactate as sole carbon and energy source. The protein is Quinone-dependent D-lactate dehydrogenase of Corynebacterium glutamicum (strain ATCC 13032 / DSM 20300 / JCM 1318 / BCRC 11384 / CCUG 27702 / LMG 3730 / NBRC 12168 / NCIMB 10025 / NRRL B-2784 / 534).